The sequence spans 173 residues: Crossover junction endodeoxyribonuclease RuvC (173 aa).

Active-site residues include aspartate 11, glutamate 71, and aspartate 143. Residues aspartate 11, glutamate 71, and aspartate 143 each coordinate Mg(2+).

It belongs to the RuvC family. Homodimer which binds Holliday junction (HJ) DNA. The HJ becomes 2-fold symmetrical on binding to RuvC with unstacked arms; it has a different conformation from HJ DNA in complex with RuvA. In the full resolvosome a probable DNA-RuvA(4)-RuvB(12)-RuvC(2) complex forms which resolves the HJ. Requires Mg(2+) as cofactor.

It localises to the cytoplasm. It carries out the reaction Endonucleolytic cleavage at a junction such as a reciprocal single-stranded crossover between two homologous DNA duplexes (Holliday junction).. In terms of biological role, the RuvA-RuvB-RuvC complex processes Holliday junction (HJ) DNA during genetic recombination and DNA repair. Endonuclease that resolves HJ intermediates. Cleaves cruciform DNA by making single-stranded nicks across the HJ at symmetrical positions within the homologous arms, yielding a 5'-phosphate and a 3'-hydroxyl group; requires a central core of homology in the junction. The consensus cleavage sequence is 5'-(A/T)TT(C/G)-3'. Cleavage occurs on the 3'-side of the TT dinucleotide at the point of strand exchange. HJ branch migration catalyzed by RuvA-RuvB allows RuvC to scan DNA until it finds its consensus sequence, where it cleaves and resolves the cruciform DNA. This Brucella suis (strain ATCC 23445 / NCTC 10510) protein is Crossover junction endodeoxyribonuclease RuvC.